The chain runs to 675 residues: MAQVAKKILVTCALPYANGSIHLGHMLEHIQADIWVRFQRMRGNQVHFICADDAHGTPIMLKAQQMGIEPEQMIAEMSQEHQQDFAGFAISYDNYHSTHSDENRELSSLIYGRLKANGYIKNRTISQLYDPEKGMFLPDRFVKGTCPKCKAPEQYGDNCEVCGATYSPTELIDPKSAVSGATPVMRESEHFFFDLPAFSDMLQAWTRSGALQEQVANKMQEWFDSGLQQWDITRDAPYFGFEVPDAPGKYFYVWLDAPIGYMGAFKNLCDKRGDLDFDEFWGKDAKTDLYHFIGKDIVYFHSLFWPAMLEGSNFRKPTNLFVHGYVTVNGAKMSKSRGTFIKAGTYLKYLDADCLRYYYAAKLSSRIDDIDLNLEDFVQRVNADIVNKVVNLASRNAGFINKRFAGQLADQLADPVLYKTFTDAATSIADAYNNRESGKAIREIMALADVANRYVDEQAPWVVAKQEGRDADLHAICSMGINLFRVLMTYLKPVLPSLTERTEAFLNTELTWDSIEQPLLGHSITAFKALFNRIDLDKVNEMVASSKEDMAPATRVTGPLADDPIQETISFDDFAKVDMRIALIQQAEFVEGSDKLLKLTLELGGETRQVFSGIRSAYPDPKALEGRMTVMVANLAPRKMRFGVSEGMVMAAGPGGSDIFLLSPDSGAQPGMQVK.

Residues 15–25 (PYANGSIHLGH) carry the 'HIGH' region motif. The Zn(2+) site is built by C146, C149, C159, and C162. The short motif at 332 to 336 (KMSKS) is the 'KMSKS' region element. Residue K335 participates in ATP binding. The tRNA-binding domain occupies 573–675 (DFAKVDMRIA…SGAQPGMQVK (103 aa)).

It belongs to the class-I aminoacyl-tRNA synthetase family. MetG type 1 subfamily. As to quaternary structure, homodimer. Zn(2+) serves as cofactor.

It is found in the cytoplasm. It carries out the reaction tRNA(Met) + L-methionine + ATP = L-methionyl-tRNA(Met) + AMP + diphosphate. In terms of biological role, is required not only for elongation of protein synthesis but also for the initiation of all mRNA translation through initiator tRNA(fMet) aminoacylation. This Yersinia pseudotuberculosis serotype O:1b (strain IP 31758) protein is Methionine--tRNA ligase.